The primary structure comprises 429 residues: 3-phosphoshikimate 1-carboxyvinyltransferase (429 aa).

Lys-11, Ser-12, and Arg-16 together coordinate 3-phosphoshikimate. Lys-11 serves as a coordination point for phosphoenolpyruvate. Residues Gly-82 and Arg-110 each contribute to the phosphoenolpyruvate site. Residues Ser-155, Gln-157, Asp-302, and Lys-329 each contribute to the 3-phosphoshikimate site. A phosphoenolpyruvate-binding site is contributed by Gln-157. The active-site Proton acceptor is the Asp-302. 2 residues coordinate phosphoenolpyruvate: Arg-333 and Arg-385.

Belongs to the EPSP synthase family. As to quaternary structure, monomer.

It is found in the cytoplasm. It carries out the reaction 3-phosphoshikimate + phosphoenolpyruvate = 5-O-(1-carboxyvinyl)-3-phosphoshikimate + phosphate. The protein operates within metabolic intermediate biosynthesis; chorismate biosynthesis; chorismate from D-erythrose 4-phosphate and phosphoenolpyruvate: step 6/7. Its function is as follows. Catalyzes the transfer of the enolpyruvyl moiety of phosphoenolpyruvate (PEP) to the 5-hydroxyl of shikimate-3-phosphate (S3P) to produce enolpyruvyl shikimate-3-phosphate and inorganic phosphate. In Helicobacter pylori (strain J99 / ATCC 700824) (Campylobacter pylori J99), this protein is 3-phosphoshikimate 1-carboxyvinyltransferase.